We begin with the raw amino-acid sequence, 294 residues long: Golgi to ER traffic protein 2 (294 aa).

A disordered region spans residues 1 to 104 (MSSELSETEK…QATSPQETID (104 aa)). Topologically, residues 1 to 166 (MSSELSETEK…LDYNNYLINN (166 aa)) are cytoplasmic. Residues 12–21 (KLIRERRQKK) are compositionally biased toward basic residues. Residues 34–65 (ITGQAENSQLDTESPLDSKSSRETTPTVTKVD) are compositionally biased toward polar residues. Over residues 85 to 95 (KVEKSQKKKEQ) the composition is skewed to basic and acidic residues. A helical membrane pass occupies residues 167-187 (LKVWSIIFKWCFFLIPYLFAL). Over 188–205 (TRSEPISFLPEQFSNPSN) the chain is Lumenal. A helical transmembrane segment spans residues 206–225 (FFMIFLSFEIVATSIYFQKL). Residues 226–272 (QNIEKSNKINGFQSNNKIVNLVSLIPEGVLPVPDIKGKVIMALQYWD) are Cytoplasmic-facing. A helical membrane pass occupies residues 273–293 (VFSMFLTDICFVLVMMGLFKL). Position 294 (I294) is a topological domain, lumenal.

Belongs to the GET2 family. In terms of assembly, component of the Golgi to ER traffic (GET) complex, which is composed of GET1, GET2 and GET3. Within the complex, GET1 and GET2 form a heterotetramer which is stabilized by phosphatidylinositol binding and which binds to the GET3 homodimer.

The protein resides in the endoplasmic reticulum membrane. Its subcellular location is the golgi apparatus membrane. Functionally, required for the post-translational delivery of tail-anchored (TA) proteins to the endoplasmic reticulum. Together with GET1, acts as a membrane receptor for soluble GET3, which recognizes and selectively binds the transmembrane domain of TA proteins in the cytosol. The GET complex cooperates with the HDEL receptor ERD2 to mediate the ATP-dependent retrieval of resident ER proteins that contain a C-terminal H-D-E-L retention signal from the Golgi to the ER. The polypeptide is Golgi to ER traffic protein 2 (Vanderwaltozyma polyspora (strain ATCC 22028 / DSM 70294 / BCRC 21397 / CBS 2163 / NBRC 10782 / NRRL Y-8283 / UCD 57-17) (Kluyveromyces polysporus)).